Reading from the N-terminus, the 318-residue chain is Acetyl-coenzyme A carboxylase carboxyl transferase subunit alpha (318 aa).

Residues 41–295 (RLTTKSQELT…KRQLIADLGS (255 aa)) form the CoA carboxyltransferase C-terminal domain.

The protein belongs to the AccA family. In terms of assembly, acetyl-CoA carboxylase is a heterohexamer composed of biotin carboxyl carrier protein (AccB), biotin carboxylase (AccC) and two subunits each of ACCase subunit alpha (AccA) and ACCase subunit beta (AccD).

The protein localises to the cytoplasm. The catalysed reaction is N(6)-carboxybiotinyl-L-lysyl-[protein] + acetyl-CoA = N(6)-biotinyl-L-lysyl-[protein] + malonyl-CoA. Its pathway is lipid metabolism; malonyl-CoA biosynthesis; malonyl-CoA from acetyl-CoA: step 1/1. Functionally, component of the acetyl coenzyme A carboxylase (ACC) complex. First, biotin carboxylase catalyzes the carboxylation of biotin on its carrier protein (BCCP) and then the CO(2) group is transferred by the carboxyltransferase to acetyl-CoA to form malonyl-CoA. The sequence is that of Acetyl-coenzyme A carboxylase carboxyl transferase subunit alpha from Idiomarina loihiensis (strain ATCC BAA-735 / DSM 15497 / L2-TR).